The following is a 335-amino-acid chain: Anthranilate phosphoribosyltransferase (335 aa).

Residues glycine 79, glycine 82–aspartate 83, threonine 87, asparagine 89–threonine 92, lysine 107–serine 115, and serine 119 each bind 5-phospho-alpha-D-ribose 1-diphosphate. An anthranilate-binding site is contributed by glycine 79. Serine 91 contributes to the Mg(2+) binding site. Anthranilate is bound at residue arginine 165. Residues aspartate 223 and glutamate 224 each coordinate Mg(2+).

The protein belongs to the anthranilate phosphoribosyltransferase family. As to quaternary structure, homodimer. Mg(2+) is required as a cofactor.

It carries out the reaction N-(5-phospho-beta-D-ribosyl)anthranilate + diphosphate = 5-phospho-alpha-D-ribose 1-diphosphate + anthranilate. It participates in amino-acid biosynthesis; L-tryptophan biosynthesis; L-tryptophan from chorismate: step 2/5. Its function is as follows. Catalyzes the transfer of the phosphoribosyl group of 5-phosphorylribose-1-pyrophosphate (PRPP) to anthranilate to yield N-(5'-phosphoribosyl)-anthranilate (PRA). The protein is Anthranilate phosphoribosyltransferase of Helicobacter pylori (strain HPAG1).